Consider the following 182-residue polypeptide: Urease accessory protein UreE (182 aa).

Residues 128–182 (PRTEPFRPEGGAYGHGRTLGHDHGPAQGHGHDHPHVHVHISHKPDEDETPDADPA) are disordered. Positions 146–162 (LGHDHGPAQGHGHDHPH) are enriched in basic and acidic residues. Acidic residues predominate over residues 173-182 (EDETPDADPA).

The protein belongs to the UreE family.

It localises to the cytoplasm. Involved in urease metallocenter assembly. Binds nickel. Probably functions as a nickel donor during metallocenter assembly. This Cereibacter sphaeroides (strain ATCC 17023 / DSM 158 / JCM 6121 / CCUG 31486 / LMG 2827 / NBRC 12203 / NCIMB 8253 / ATH 2.4.1.) (Rhodobacter sphaeroides) protein is Urease accessory protein UreE.